The sequence spans 766 residues: BMP/retinoic acid-inducible neural-specific protein 3 (766 aa).

The first 33 residues, 1-33, serve as a signal peptide directing secretion; it reads MIWRSRAGAELFSLMALWEWIALSLHCWVLAVA. An MACPF domain is found at 74-264; the sequence is RYKIYREFGR…FVQAALSYIA (191 aa). N-linked (GlcNAc...) asparagine glycosylation is found at N168, N337, N456, N562, N609, and N641.

This sequence belongs to the BRINP family. As to expression, strongly expressed in oral keratinocytes compared to the weak expression in tongue squamous cell carcinoma (SCC). Expressed in endothelial and aortic smooth muscle cells. Overexpressed in gonadotropinomas compared to normal pituitarie tissues.

It localises to the secreted. The protein resides in the mitochondrion. Its function is as follows. Inhibits neuronal cell proliferation by negative regulation of the cell cycle transition. Promotes pituitary gonadotrope cell proliferation, migration and invasion, when overexpressed. May play a role in cell pituitary tumor development. The chain is BMP/retinoic acid-inducible neural-specific protein 3 (BRINP3) from Homo sapiens (Human).